Here is a 463-residue protein sequence, read N- to C-terminus: Lipase 6 (463 aa).

Residues 1 to 16 (MRDLILFLSLLHTIFA) form the signal peptide. Cysteine 112 and cysteine 285 are disulfide-bonded. The Charge relay system role is filled by serine 196. A glycan (N-linked (GlcNAc...) asparagine) is linked at asparagine 231. Catalysis depends on charge relay system residues aspartate 348 and histidine 381. Cysteines 364 and 409 form a disulfide. Asparagine 422 carries an N-linked (GlcNAc...) asparagine glycan.

The protein belongs to the AB hydrolase superfamily. Lipase family. Class Lip subfamily.

The protein localises to the secreted. It carries out the reaction a triacylglycerol + H2O = a diacylglycerol + a fatty acid + H(+). In terms of biological role, secreted lipase that is able to hydrolyze both the neutral triacylglycerols and the monopalmitate ester Tween 40, allowing the use of hydrolyzed products as carbon sources. Has broad lipolytic activity, which may be important for colonization and subsequent infection, therefore contributing to the persistence and virulence in human tissue. The chain is Lipase 6 from Candida albicans (strain SC5314 / ATCC MYA-2876) (Yeast).